The chain runs to 362 residues: Tyrosine-protein kinase SRK2 (362 aa).

The SH2 domain maps to 1–70 (TFLVRESESK…GLCVNLRQPC (70 aa)). In terms of domain architecture, Protein kinase spans 95–348 (ITLIRKLGAG…ALQWRLEDFF (254 aa)). ATP-binding positions include 101-109 (LGAGQFGEV) and lysine 123. Aspartate 214 functions as the Proton acceptor in the catalytic mechanism.

Belongs to the protein kinase superfamily. Tyr protein kinase family.

Its subcellular location is the cytoplasm. It carries out the reaction L-tyrosyl-[protein] + ATP = O-phospho-L-tyrosyl-[protein] + ADP + H(+). This is Tyrosine-protein kinase SRK2 (SRK2) from Spongilla lacustris (Freshwater sponge).